The primary structure comprises 571 residues: Wee1-like protein kinase 1-A (571 aa).

The interval 1–101 (MSLQPVPHRL…PDCPGTPPHK (101 aa)) is disordered. Residues 81–98 (PASPPGPAASPPDCPGTP) show a composition bias toward pro residues. In terms of domain architecture, Protein kinase spans 224–494 (FHELEKIGSG…SMALVKHSVL (271 aa)). Residues 230–238 (IGSGEFGSV) and K253 contribute to the ATP site. Catalysis depends on D351, which acts as the Proton acceptor. The Mg(2+) site is built by N356 and D388. Residues 500–539 (KNAEQLRIELNAEKFKNALLQKELKKAQIAKAAAEERALF) adopt a coiled-coil conformation.

The protein belongs to the protein kinase superfamily. Ser/Thr protein kinase family. WEE1 subfamily. As to expression, zygotically expressed. Expressed in regions of the embryo that are devoid of mitotic cells, such as the involuting mesoderm.

The protein resides in the nucleus. It catalyses the reaction L-tyrosyl-[protein] + ATP = O-phospho-L-tyrosyl-[protein] + ADP + H(+). In terms of biological role, acts as a zygotic negative regulator of entry into mitosis (G2 to M transition) by protecting the nucleus from cytoplasmically activated cyclin B1-complexed cdk1 before the onset of mitosis by mediating phosphorylation of cdk1 on 'Tyr-15'. Specifically phosphorylates and inactivates cyclin B1-complexed cdk1 reaching a maximum during G2 phase and a minimum as cells enter M phase. Phosphorylation of cyclin B1-cdk1 occurs exclusively on 'Tyr-15' and phosphorylation of monomeric cdk1 does not occur. Involved in convergent extension of the paraxial mesoderm during neurulation by inhibiting the cell cycle. The sequence is that of Wee1-like protein kinase 1-A (wee1-a) from Xenopus laevis (African clawed frog).